Consider the following 807-residue polypeptide: Leucine--tRNA ligase (807 aa).

Positions 38 to 49 (PYPSGSGLHVGH) match the 'HIGH' region motif. The short motif at 579 to 583 (KMSKS) is the 'KMSKS' region element. K582 serves as a coordination point for ATP.

This sequence belongs to the class-I aminoacyl-tRNA synthetase family.

It is found in the cytoplasm. The catalysed reaction is tRNA(Leu) + L-leucine + ATP = L-leucyl-tRNA(Leu) + AMP + diphosphate. The chain is Leucine--tRNA ligase from Mycoplasmopsis pulmonis (strain UAB CTIP) (Mycoplasma pulmonis).